The following is a 198-amino-acid chain: dITP/XTP pyrophosphatase (198 aa).

Residue 7–12 participates in substrate binding; sequence THNPHK. E40 and D69 together coordinate Mg(2+). Residue D69 is the Proton acceptor of the active site. Substrate is bound by residues T70, 151 to 154, K174, and 179 to 180; these read FGYD and HR.

The protein belongs to the HAM1 NTPase family. As to quaternary structure, homodimer. Mg(2+) is required as a cofactor.

It carries out the reaction XTP + H2O = XMP + diphosphate + H(+). It catalyses the reaction dITP + H2O = dIMP + diphosphate + H(+). The catalysed reaction is ITP + H2O = IMP + diphosphate + H(+). Pyrophosphatase that catalyzes the hydrolysis of nucleoside triphosphates to their monophosphate derivatives, with a high preference for the non-canonical purine nucleotides XTP (xanthosine triphosphate), dITP (deoxyinosine triphosphate) and ITP. Seems to function as a house-cleaning enzyme that removes non-canonical purine nucleotides from the nucleotide pool, thus preventing their incorporation into DNA/RNA and avoiding chromosomal lesions. This is dITP/XTP pyrophosphatase from Thermoanaerobacter sp. (strain X514).